Consider the following 433-residue polypeptide: Probable mannan endo-1,4-beta-mannosidase F (433 aa).

An N-terminal signal peptide occupies residues 1–19 (MKRQALTLIPLLGAAAAQS). Residues 20–53 (GPYGQCGGNDWSGATTCVSGYVCVYQNEWYSQCV) form the CBM1 domain. Residues 56–82 (TATSSSTTLTTTTSATTRTTTTTTSTT) are thr-rich linker. The tract at residues 83–433 (SVPSSTNFPS…TEHMERIAAR (351 aa)) is catalytic. N97 is a glycosylation site (N-linked (GlcNAc...) asparagine). Substrate contacts are provided by W142 and N255. The active-site Proton donor is the E256. Residue Y331 participates in substrate binding. Catalysis depends on E364, which acts as the Nucleophile. Residue W394 participates in substrate binding.

The protein belongs to the glycosyl hydrolase 5 (cellulase A) family.

It localises to the secreted. It carries out the reaction Random hydrolysis of (1-&gt;4)-beta-D-mannosidic linkages in mannans, galactomannans and glucomannans.. In terms of biological role, endo-1,4-mannanase, a crucial enzyme for depolymerization of seed galactomannans and wood galactoglucomannans. The sequence is that of Probable mannan endo-1,4-beta-mannosidase F (manF) from Emericella nidulans (strain FGSC A4 / ATCC 38163 / CBS 112.46 / NRRL 194 / M139) (Aspergillus nidulans).